Consider the following 161-residue polypeptide: Cell division protein SepF (161 aa).

The protein belongs to the SepF family. In terms of assembly, homodimer. Interacts with FtsZ.

The protein localises to the cytoplasm. In terms of biological role, cell division protein that is part of the divisome complex and is recruited early to the Z-ring. Probably stimulates Z-ring formation, perhaps through the cross-linking of FtsZ protofilaments. Its function overlaps with FtsA. This chain is Cell division protein SepF, found in Finegoldia magna (strain ATCC 29328 / DSM 20472 / WAL 2508) (Peptostreptococcus magnus).